Consider the following 453-residue polypeptide: Probable glycine dehydrogenase (decarboxylating) subunit 1 (453 aa).

It belongs to the GcvP family. N-terminal subunit subfamily. The glycine cleavage system is composed of four proteins: P, T, L and H. In this organism, the P 'protein' is a heterodimer of two subunits.

The catalysed reaction is N(6)-[(R)-lipoyl]-L-lysyl-[glycine-cleavage complex H protein] + glycine + H(+) = N(6)-[(R)-S(8)-aminomethyldihydrolipoyl]-L-lysyl-[glycine-cleavage complex H protein] + CO2. The glycine cleavage system catalyzes the degradation of glycine. The P protein binds the alpha-amino group of glycine through its pyridoxal phosphate cofactor; CO(2) is released and the remaining methylamine moiety is then transferred to the lipoamide cofactor of the H protein. In Dictyoglomus thermophilum (strain ATCC 35947 / DSM 3960 / H-6-12), this protein is Probable glycine dehydrogenase (decarboxylating) subunit 1.